The chain runs to 290 residues: Probable porphobilinogen deaminase (290 aa).

S-(dipyrrolylmethanemethyl)cysteine is present on Cys-230.

This sequence belongs to the HMBS family. It depends on dipyrromethane as a cofactor.

It catalyses the reaction 4 porphobilinogen + H2O = hydroxymethylbilane + 4 NH4(+). Its pathway is porphyrin-containing compound metabolism; protoporphyrin-IX biosynthesis; coproporphyrinogen-III from 5-aminolevulinate: step 2/4. Functionally, tetrapolymerization of the monopyrrole PBG into the hydroxymethylbilane pre-uroporphyrinogen in several discrete steps. This Metallosphaera sedula (strain ATCC 51363 / DSM 5348 / JCM 9185 / NBRC 15509 / TH2) protein is Probable porphobilinogen deaminase.